A 446-amino-acid polypeptide reads, in one-letter code: Phosphoglucosamine mutase (446 aa).

The active-site Phosphoserine intermediate is Ser-103. 4 residues coordinate Mg(2+): Ser-103, Asp-242, Asp-244, and Asp-246. Ser-103 is subject to Phosphoserine.

It belongs to the phosphohexose mutase family. The cofactor is Mg(2+). In terms of processing, activated by phosphorylation.

The catalysed reaction is alpha-D-glucosamine 1-phosphate = D-glucosamine 6-phosphate. Its function is as follows. Catalyzes the conversion of glucosamine-6-phosphate to glucosamine-1-phosphate. This is Phosphoglucosamine mutase from Vibrio vulnificus (strain YJ016).